A 287-amino-acid polypeptide reads, in one-letter code: Nucleotide-binding protein Sfri_3380 (287 aa).

8 to 15 (GRSGSGKS) is a binding site for ATP. Residue 56–59 (DVRN) participates in GTP binding.

It belongs to the RapZ-like family.

In terms of biological role, displays ATPase and GTPase activities. The sequence is that of Nucleotide-binding protein Sfri_3380 from Shewanella frigidimarina (strain NCIMB 400).